Here is a 316-residue protein sequence, read N- to C-terminus: Methionyl-tRNA formyltransferase (316 aa).

114 to 117 is a (6S)-5,6,7,8-tetrahydrofolate binding site; that stretch reads SLLP.

The protein belongs to the Fmt family.

The enzyme catalyses L-methionyl-tRNA(fMet) + (6R)-10-formyltetrahydrofolate = N-formyl-L-methionyl-tRNA(fMet) + (6S)-5,6,7,8-tetrahydrofolate + H(+). In terms of biological role, attaches a formyl group to the free amino group of methionyl-tRNA(fMet). The formyl group appears to play a dual role in the initiator identity of N-formylmethionyl-tRNA by promoting its recognition by IF2 and preventing the misappropriation of this tRNA by the elongation apparatus. This is Methionyl-tRNA formyltransferase from Aromatoleum aromaticum (strain DSM 19018 / LMG 30748 / EbN1) (Azoarcus sp. (strain EbN1)).